The chain runs to 248 residues: Carboxy-S-adenosyl-L-methionine synthase (248 aa).

S-adenosyl-L-methionine-binding positions include Tyr40, 65-67 (GCS), 95-96 (DN), 123-124 (DI), Asn138, and Arg205.

This sequence belongs to the class I-like SAM-binding methyltransferase superfamily. Cx-SAM synthase family. In terms of assembly, homodimer.

It catalyses the reaction prephenate + S-adenosyl-L-methionine = carboxy-S-adenosyl-L-methionine + 3-phenylpyruvate + H2O. In terms of biological role, catalyzes the conversion of S-adenosyl-L-methionine (SAM) to carboxy-S-adenosyl-L-methionine (Cx-SAM). In Hahella chejuensis (strain KCTC 2396), this protein is Carboxy-S-adenosyl-L-methionine synthase.